The following is an 83-amino-acid chain: Mitochondrial import inner membrane translocase subunit Tim8 B (83 aa).

A2 carries the N-acetylalanine modification. The Twin CX3C motif signature appears at 36–59; sequence CWDKCVEKPGNRLDSRTENCLSSC. Disulfide bonds link C36-C59 and C40-C55.

It belongs to the small Tim family. As to quaternary structure, heterohexamer; possibly composed of 3 copies of TIMM8B and 3 copies of TIMM13, named soluble 70 kDa complex. Associates with the TIM22 complex, whose core is composed of TIMM22. In terms of tissue distribution, ubiquitous, with highest expression in heart, kidney, liver and skeletal muscle.

The protein resides in the mitochondrion inner membrane. Functionally, probable mitochondrial intermembrane chaperone that participates in the import and insertion of some multi-pass transmembrane proteins into the mitochondrial inner membrane. Also required for the transfer of beta-barrel precursors from the TOM complex to the sorting and assembly machinery (SAM complex) of the outer membrane. Acts as a chaperone-like protein that protects the hydrophobic precursors from aggregation and guide them through the mitochondrial intermembrane space. In Homo sapiens (Human), this protein is Mitochondrial import inner membrane translocase subunit Tim8 B (TIMM8B).